The chain runs to 414 residues: Probable peptidoglycan glycosyltransferase FtsW (414 aa).

The Cytoplasmic portion of the chain corresponds to 1–12; the sequence is MRLSLPRLKMPR. Residues 13–33 traverse the membrane as a helical segment; sequence LPGFSILVWISTALKGWVMGS. The Periplasmic segment spans residues 34–47; sequence REKDTDSLIMYDRT. Residues 48–68 form a helical membrane-spanning segment; that stretch reads LLWLTFGLAAIGFIMVTSASM. Over 69–86 the chain is Cytoplasmic; the sequence is PIGQRLTNDPFFFAKRDG. The chain crosses the membrane as a helical span at residues 87–107; it reads VYLILAFILAIITLRLPMEFW. At 108-111 the chain is on the periplasmic side; the sequence is QRYS. A helical transmembrane segment spans residues 112 to 132; the sequence is ATMLLGSIILLMIVLVVGSSV. Topologically, residues 133-174 are cytoplasmic; sequence KGASRWIDLGLLRIQPAELTKLSLFCYIANYLVRKGDEVRNN. A helical transmembrane segment spans residues 175–194; the sequence is LRGFLKPMGVILVLAVLLLA. Topologically, residues 195–197 are periplasmic; that stretch reads QPD. The helical transmembrane segment at 198 to 217 threads the bilayer; that stretch reads LGTVVVLFVTTLAMLFLAGA. Position 218 (lysine 218) is a topological domain, cytoplasmic. A helical membrane pass occupies residues 219–239; the sequence is LWQFIAIIGMGISAVVLLILA. Residues 240-301 are Periplasmic-facing; that stretch reads EPYRIRRVTA…PEAHTDFIFA (62 aa). A helical membrane pass occupies residues 302–322; that stretch reads IIGEELGYVGVVLALLMVFFV. Over 323 to 342 the chain is Cytoplasmic; the sequence is AFRAMSIGRKALEIDHRFSG. Residues 343-363 traverse the membrane as a helical segment; that stretch reads FLACSIGIWFSFQALVNVGAA. The Periplasmic portion of the chain corresponds to 364-373; sequence AGMLPTKGLT. The chain crosses the membrane as a helical span at residues 374–394; the sequence is LPLISYGGSSLLIMSTAIMML. At 395–414 the chain is on the cytoplasmic side; the sequence is LRIDYETRLEKAQAFVRGSR.

This sequence belongs to the SEDS family. FtsW subfamily.

Its subcellular location is the cell inner membrane. It carries out the reaction [GlcNAc-(1-&gt;4)-Mur2Ac(oyl-L-Ala-gamma-D-Glu-L-Lys-D-Ala-D-Ala)](n)-di-trans,octa-cis-undecaprenyl diphosphate + beta-D-GlcNAc-(1-&gt;4)-Mur2Ac(oyl-L-Ala-gamma-D-Glu-L-Lys-D-Ala-D-Ala)-di-trans,octa-cis-undecaprenyl diphosphate = [GlcNAc-(1-&gt;4)-Mur2Ac(oyl-L-Ala-gamma-D-Glu-L-Lys-D-Ala-D-Ala)](n+1)-di-trans,octa-cis-undecaprenyl diphosphate + di-trans,octa-cis-undecaprenyl diphosphate + H(+). It participates in cell wall biogenesis; peptidoglycan biosynthesis. Peptidoglycan polymerase that is essential for cell division. This Escherichia coli O157:H7 protein is Probable peptidoglycan glycosyltransferase FtsW.